A 150-amino-acid chain; its full sequence is MNATKFLVLLVIGVLCAIVTARQVKDLSTETKLGASLPKTTTKGIGAQLSATGSTFSSSSVVSYANGFNNPKGPGANAFESGSTFTSGQVTAKGRKARVSSASASTATGEAAAAVTRKAAAARAKGKVASASRVKGSSEKKKKDRKGKKD.

The N-terminal stretch at 1–21 (MNATKFLVLLVIGVLCAIVTA) is a signal peptide. Residues 119 to 135 (AAAARAKGKVASASRVK) are compositionally biased toward low complexity. The interval 119–150 (AAAARAKGKVASASRVKGSSEKKKKDRKGKKD) is disordered.

It belongs to the UPF0540 family.

This chain is UPF0540 protein At1g62080, found in Arabidopsis thaliana (Mouse-ear cress).